The sequence spans 97 residues: MSRRCELTAKAPLVGHKVSHSNIKTKRRFLPNLVNVTFVSETLSSSVRFRVSTHALRSVDHRGGFDAFLLKARDSELSPKAIELKRQIQKKQAAKAG.

This sequence belongs to the bacterial ribosomal protein bL28 family.

The protein is Large ribosomal subunit protein bL28 of Nitrobacter winogradskyi (strain ATCC 25391 / DSM 10237 / CIP 104748 / NCIMB 11846 / Nb-255).